The chain runs to 108 residues: Thiosulfate sulfurtransferase GlpE (108 aa).

Residues Q18–L106 form the Rhodanese domain. C66 acts as the Cysteine persulfide intermediate in catalysis.

This sequence belongs to the GlpE family.

It is found in the cytoplasm. The enzyme catalyses thiosulfate + hydrogen cyanide = thiocyanate + sulfite + 2 H(+). The catalysed reaction is thiosulfate + [thioredoxin]-dithiol = [thioredoxin]-disulfide + hydrogen sulfide + sulfite + 2 H(+). Functionally, transferase that catalyzes the transfer of sulfur from thiosulfate to thiophilic acceptors such as cyanide or dithiols. May function in a CysM-independent thiosulfate assimilation pathway by catalyzing the conversion of thiosulfate to sulfite, which can then be used for L-cysteine biosynthesis. The sequence is that of Thiosulfate sulfurtransferase GlpE from Glaesserella parasuis serovar 5 (strain SH0165) (Haemophilus parasuis).